The sequence spans 176 residues: Large ribosomal subunit protein uL22 (176 aa).

Residues 113–176 (VVESRPSKDQ…EISEAKGGSD (64 aa)) are disordered. A compositionally biased stretch (low complexity) spans 136 to 152 (SKAAATAPAKKSSASKA). A compositionally biased stretch (basic and acidic residues) spans 159-176 (TKAESKTSEISEAKGGSD).

This sequence belongs to the universal ribosomal protein uL22 family. In terms of assembly, part of the 50S ribosomal subunit.

Functionally, this protein binds specifically to 23S rRNA; its binding is stimulated by other ribosomal proteins, e.g. L4, L17, and L20. It is important during the early stages of 50S assembly. It makes multiple contacts with different domains of the 23S rRNA in the assembled 50S subunit and ribosome. The globular domain of the protein is located near the polypeptide exit tunnel on the outside of the subunit, while an extended beta-hairpin is found that lines the wall of the exit tunnel in the center of the 70S ribosome. This is Large ribosomal subunit protein uL22 from Mycobacterium ulcerans (strain Agy99).